Here is a 276-residue protein sequence, read N- to C-terminus: Fructoselysine 3-epimerase (276 aa).

Glu-148 serves as the catalytic Proton donor/acceptor. A divalent metal cation contacts are provided by Glu-148, Asp-181, His-207, and Glu-247. The active-site Proton donor/acceptor is the Glu-247.

This sequence belongs to the FrlC family. Homooctamer. Requires a divalent metal cation as cofactor.

The enzyme catalyses N(6)-(D-psicosyl)-L-lysine = N(6)-(D-fructosyl)-L-lysine. Catalyzes the reversible interconversion of fructoselysine with its C-3 epimer, psicoselysine. May allow S.flexneri to utilize psicoselysine for growth. The sequence is that of Fructoselysine 3-epimerase (frlC) from Shigella flexneri.